We begin with the raw amino-acid sequence, 471 residues long: ATP synthase subunit beta (471 aa).

154–161 (GGAGVGKT) is a binding site for ATP.

It belongs to the ATPase alpha/beta chains family. F-type ATPases have 2 components, CF(1) - the catalytic core - and CF(0) - the membrane proton channel. CF(1) has five subunits: alpha(3), beta(3), gamma(1), delta(1), epsilon(1). CF(0) has three main subunits: a(1), b(2) and c(9-12). The alpha and beta chains form an alternating ring which encloses part of the gamma chain. CF(1) is attached to CF(0) by a central stalk formed by the gamma and epsilon chains, while a peripheral stalk is formed by the delta and b chains.

It localises to the cell membrane. The enzyme catalyses ATP + H2O + 4 H(+)(in) = ADP + phosphate + 5 H(+)(out). In terms of biological role, produces ATP from ADP in the presence of a proton gradient across the membrane. The catalytic sites are hosted primarily by the beta subunits. The chain is ATP synthase subunit beta from Mesomycoplasma hyopneumoniae (strain 7448) (Mycoplasma hyopneumoniae).